The following is a 380-amino-acid chain: Cytochrome b (380 aa).

4 helical membrane passes run 34–54, 78–99, 114–134, and 179–199; these read FGSLLAVCLATQIITGLLLAM, WLIRNLHANGASFFFICIFLHI, WNTGVVLLLTLMATAFVGYVL, and FFALHFLLPFVIAGITIIHLT. Residues His-84 and His-98 each contribute to the heme b site. Heme b contacts are provided by His-183 and His-197. Residue His-202 coordinates a ubiquinone. The next 4 helical transmembrane spans lie at 227–247, 289–309, 321–341, and 348–368; these read LKDILGLTLMFIPFLTLALFS, LGGVLALAASVLILLLIPFLH, LSQILFWLLVANLLILTWIGS, and FIIIGQMASFSYFSILLILFP.

The protein belongs to the cytochrome b family. In terms of assembly, the cytochrome bc1 complex contains 11 subunits: 3 respiratory subunits (MT-CYB, CYC1 and UQCRFS1), 2 core proteins (UQCRC1 and UQCRC2) and 6 low-molecular weight proteins (UQCRH/QCR6, UQCRB/QCR7, UQCRQ/QCR8, UQCR10/QCR9, UQCR11/QCR10 and a cleavage product of UQCRFS1). This cytochrome bc1 complex then forms a dimer. Heme b serves as cofactor.

The protein resides in the mitochondrion inner membrane. Component of the ubiquinol-cytochrome c reductase complex (complex III or cytochrome b-c1 complex) that is part of the mitochondrial respiratory chain. The b-c1 complex mediates electron transfer from ubiquinol to cytochrome c. Contributes to the generation of a proton gradient across the mitochondrial membrane that is then used for ATP synthesis. This Pavo muticus (Green peafowl) protein is Cytochrome b (MT-CYB).